A 344-amino-acid polypeptide reads, in one-letter code: Ubiquitin-associated domain-containing protein 2 (344 aa).

An N-terminal signal peptide occupies residues 1–34 (MFTSTGSNGLYKAPLSKSLLLVPSAISILLTLLF). The Extracellular segment spans residues 35–91 (QHYQKFFAYNLQAIKEDFQIWRLVCGRVICLDLKDTFCSSLLIYNFRIFERRYGSRK). Residues 92–111 (FSSFLLGAWTLSALFDLLLV) form a helical membrane-spanning segment. Topologically, residues 112-123 (EAAQYVFGITIN) are cytoplasmic. Residues 124–142 (SLPSGFLGPVFALFVPFYC) form a helical membrane-spanning segment. Topologically, residues 143-162 (SIPRVQVTQVLGYFSITNKT) are extracellular. Asn160 carries an N-linked (GlcNAc...) asparagine glycan. A helical transmembrane segment spans residues 163–183 (LVYILGLQLLTSGSYIWILAL). Residues 184 to 344 (SGLISGICYN…NVATNFLLQH (161 aa)) lie on the Cytoplasmic side of the membrane. The disordered stretch occupies residues 284 to 307 (RHNENYQDHHPSDQDTPPPTEVSE). Residues 286 to 296 (NENYQDHHPSD) show a composition bias toward basic and acidic residues. The 41-residue stretch at 304–344 (EVSEEQVARLMEMGFSRGDALEALRASNNDLNVATNFLLQH) folds into the UBA domain.

Its subcellular location is the endoplasmic reticulum membrane. Functionally, restricts trafficking of FAF2 from the endoplasmic reticulum to lipid droplets. May negatively regulate the canonical Wnt signaling pathway in the lymphocytes. This is Ubiquitin-associated domain-containing protein 2 (UBAC2) from Gallus gallus (Chicken).